The primary structure comprises 366 residues: MSDRNTSNSLTLKERMLSAGAGSVLTSLILTPMDVVRIRLQQQQMIPDCSCDGAAEVPNAVSSGSKMKTFTNVGGQNLNNAKIFWESACFQELHCKNSSLKFNGTLEAFTKIASVEGITSLWRGISLTLLMAIPANMVYFSGYEYIRDVSPIASTYPTLNPLFCGAIARVFAATSIAPLELVKTKLQSIPRSSKSTKTWMMVKDLLNETRQEMKMVGPSRALFKGLEITLWRDVPFSAIYWSSYELCKERLWLDSTRFASKDANWVHFINSFASGCISGMIAAICTHPFDVGKTRWQISMMNNSDPKGGNRSRNMFKFLETIWRTEGLAALYTGLAARVIKIRPSCAIMISSYEISKKVFGNKLHQ.

Solcar repeat units follow at residues 14–149 (ERML…IRDV), 156–250 (YPTL…CKER), and 266–359 (VHFI…SKKV). 6 consecutive transmembrane segments (helical) span residues 17–36 (LSAGAGSVLTSLILTPMDVV), 126–146 (SLTLLMAIPANMVYFSGYEYI), 162–182 (LFCGAIARVFAATSIAPLELV), 229–249 (TLWRDVPFSAIYWSSYELCKE), 268–286 (FINSFASGCISGMIAAICT), and 331–352 (LYTGLAARVIKIRPSCAIMISS).

Belongs to the mitochondrial carrier (TC 2.A.29) family.

It is found in the mitochondrion inner membrane. Functionally, involved in the mitochondrial activation of SOD2 by specifically facilitating insertion of the essential manganese cofactor. Has the ability to activate iron regulon in an iron-dependent manner. Responds to calorie restriction (CR) strength. The chain is Mitochondrial carrier protein MTM1 (MTM1) from Saccharomyces cerevisiae (strain ATCC 204508 / S288c) (Baker's yeast).